A 154-amino-acid chain; its full sequence is MQALVQVRGPVDMSRDIQDTLEMLNIHSVNHCALVPETDTYSGMVAKVNDYVAFGEPSEAVLTDLIESRGEPASGAGDVDDAWVAEHTEYDDVADLAGALLAEETTLSDAGLAPVIRLHPPRGGHDGIKTPASDGGQLGKHTTEEIDHLLTDMR.

A disordered region spans residues 122-141 (RGGHDGIKTPASDGGQLGKH).

The protein belongs to the universal ribosomal protein uL30 family. As to quaternary structure, part of the 50S ribosomal subunit.

In Halobacterium salinarum (strain ATCC 29341 / DSM 671 / R1), this protein is Large ribosomal subunit protein uL30.